A 261-amino-acid polypeptide reads, in one-letter code: Sugar fermentation stimulation protein homolog (261 aa).

The tract at residues 1-23 (MTDSAKPQNPDPGHESRRVAPLA) is disordered.

The protein belongs to the SfsA family.

This chain is Sugar fermentation stimulation protein homolog, found in Syntrophobacter fumaroxidans (strain DSM 10017 / MPOB).